The chain runs to 50 residues: MSKLTKGRKIRLSKATAQNRRVPSWVMIKTKRAVVSHPKRRSWRRSSLKV.

This sequence belongs to the eukaryotic ribosomal protein eL39 family.

This Methanosphaerula palustris (strain ATCC BAA-1556 / DSM 19958 / E1-9c) protein is Large ribosomal subunit protein eL39.